A 228-amino-acid polypeptide reads, in one-letter code: uncharacterized protein (228 aa).

This is an uncharacterized protein from Ictalurid herpesvirus 1 (strain Auburn) (IcHV-1).